Reading from the N-terminus, the 294-residue chain is Homeobox-leucine zipper protein ATHB-13 (294 aa).

Residues 82–141 constitute a DNA-binding region (homeobox); that stretch reads MGEKKRRLNMEQVKTLEKNFELGNKLEPERKMQLARALGLQPRQIAIWFQNRRARWKTKQ. Residues 142-177 form a leucine-zipper region; that stretch reads LEKDYDTLKRQFDTLKAENDLLQTHNQKLQAEIMGL. The tract at residues 181 to 246 is disordered; that stretch reads EQTESINLNK…FFPPSPATAT (66 aa). Low complexity predominate over residues 197–210; the sequence is SNRSDNSSDNLRLD. The segment covering 214-223 has biased composition (polar residues); sequence APPSNDSTLT.

The protein belongs to the HD-ZIP homeobox family. Class I subfamily. In terms of tissue distribution, predominantly expressed in leaves and flowers.

The protein localises to the nucleus. Probable transcription factor that may act in the sucrose-signaling pathway. This is Homeobox-leucine zipper protein ATHB-13 (ATHB-13) from Arabidopsis thaliana (Mouse-ear cress).